The chain runs to 170 residues: Superoxide dismutase [Fe] (170 aa).

Residues H27, H81, D163, and H167 each coordinate Fe cation.

This sequence belongs to the iron/manganese superoxide dismutase family. Homodimer. Fe cation serves as cofactor.

It catalyses the reaction 2 superoxide + 2 H(+) = H2O2 + O2. Destroys superoxide anion radicals which are normally produced within the cells and which are toxic to biological systems. This Raoultella planticola (Klebsiella planticola) protein is Superoxide dismutase [Fe] (sodA).